The primary structure comprises 69 residues: Large ribosomal subunit protein uL29 (69 aa).

Belongs to the universal ribosomal protein uL29 family.

The protein is Large ribosomal subunit protein uL29 of Staphylococcus aureus (strain Mu3 / ATCC 700698).